The sequence spans 204 residues: Urease accessory protein UreG 1 (204 aa).

A GTP-binding site is contributed by 14–21 (GPVGSGKT).

This sequence belongs to the SIMIBI class G3E GTPase family. UreG subfamily. As to quaternary structure, homodimer. UreD, UreF and UreG form a complex that acts as a GTP-hydrolysis-dependent molecular chaperone, activating the urease apoprotein by helping to assemble the nickel containing metallocenter of UreC. The UreE protein probably delivers the nickel.

The protein localises to the cytoplasm. Facilitates the functional incorporation of the urease nickel metallocenter. This process requires GTP hydrolysis, probably effectuated by UreG. This is Urease accessory protein UreG 1 from Methylorubrum populi (strain ATCC BAA-705 / NCIMB 13946 / BJ001) (Methylobacterium populi).